Here is a 396-residue protein sequence, read N- to C-terminus: S-adenosylmethionine synthase (396 aa).

His-16 provides a ligand contact to ATP. Residue Asp-18 participates in Mg(2+) binding. Position 44 (Glu-44) interacts with K(+). L-methionine contacts are provided by Glu-57 and Gln-100. Positions 100–110 (QSPDIAQGVDR) are flexible loop. ATP is bound by residues 167 to 169 (DAK), 233 to 234 (RF), Asp-242, 248 to 249 (RK), Ala-265, and Lys-269. Residue Asp-242 participates in L-methionine binding. Lys-273 provides a ligand contact to L-methionine.

Belongs to the AdoMet synthase family. As to quaternary structure, homotetramer; dimer of dimers. It depends on Mg(2+) as a cofactor. The cofactor is K(+).

It is found in the cytoplasm. The enzyme catalyses L-methionine + ATP + H2O = S-adenosyl-L-methionine + phosphate + diphosphate. Its pathway is amino-acid biosynthesis; S-adenosyl-L-methionine biosynthesis; S-adenosyl-L-methionine from L-methionine: step 1/1. In terms of biological role, catalyzes the formation of S-adenosylmethionine (AdoMet) from methionine and ATP. The overall synthetic reaction is composed of two sequential steps, AdoMet formation and the subsequent tripolyphosphate hydrolysis which occurs prior to release of AdoMet from the enzyme. This is S-adenosylmethionine synthase from Paraburkholderia xenovorans (strain LB400).